Consider the following 625-residue polypeptide: Glucokinase regulatory protein (625 aa).

SIS domains follow at residues 90 to 286 (VQEV…QGIA) and 320 to 499 (VSTS…LLGK). Beta-D-fructose 1-phosphate is bound by residues 109–110 (TS), E153, and 179–181 (SVG). Position 109-110 (109-110 (TS)) interacts with beta-D-fructose 6-phosphate. 179 to 181 (SVG) provides a ligand contact to beta-D-fructose 6-phosphate. The segment at 199 to 200 (AV) is important for interaction with GCK. E348 lines the beta-D-fructose 1-phosphate pocket. The segment at 463–465 (LLF) is essential for interaction with GCK. K514 serves as a coordination point for beta-D-fructose 1-phosphate. Residue K514 coordinates beta-D-fructose 6-phosphate.

It belongs to the GCKR family. Interacts (fructose 6-phosphate bound form) with GCK. In terms of tissue distribution, found in liver and pancreas. Not detected in muscle, brain, heart, thymus, intestine, uterus, adipose tissue, kidney, adrenal, lung or spleen.

The protein localises to the cytoplasm. The protein resides in the nucleus. Its subcellular location is the mitochondrion. Functionally, regulates glucokinase (GCK) by forming an inactive complex with this enzyme. Acts by promoting GCK recruitment to the nucleus, possibly to provide a reserve of GCK that can be quickly released in the cytoplasm after a meal. The affinity of GCKR for GCK is modulated by fructose metabolites: GCKR with bound fructose 6-phosphate has increased affinity for GCK, while GCKR with bound fructose 1-phosphate has strongly decreased affinity for GCK and does not inhibit GCK activity. This chain is Glucokinase regulatory protein, found in Homo sapiens (Human).